Reading from the N-terminus, the 669-residue chain is MRRNTDQESPIMSYYSSFFFLFLFSFLTSFRVSAQDPTYVYHTCQNTANYTSNSTYNNNLKTLLASLSSRNASYSTGFQNATVGQAPDRVTGLFNCRGDVSTEVCRRCVSFAVNDTLTRCPNQKEATLYYDECVLRYSNQNILSTLITTGGVILVNTRNVTSNQLDLLSDLVLPTLNQAATVALNSSKKFGTRKNNFTALQSFYGLVQCTPDLTRQDCSRCLQLVINQIPTDRIGARIINPSCTSRYEIYAFYTESAVPPPPPPPSISTPPVSAPPRSGKDGNSKVLVIAIVVPIIVAVLLFIAGYCFLTRRARKSYYTPSAFAGDDITTADSLQLDYRTIQTATDDFVESNKIGQGGFGEVYKGTLSDGTEVAVKRLSKSSGQGEVEFKNEVVLVAKLQHRNLVRLLGFCLDGEERVLVYEYVPNKSLDYFLFDPAKKGQLDWTRRYKIIGGVARGILYLHQDSRLTIIHRDLKASNILLDADMNPKIADFGMARIFGLDQTEENTSRIVGTYGYMSPEYAMHGQYSMKSDVYSFGVLVLEIISGKKNSSFYQTDGAHDLVSYAWGLWSNGRPLELVDPAIVENCQRNEVVRCVHIGLLCVQEDPAERPTLSTIVLMLTSNTVTLPVPRQPGLFFQSRIGKDPLDTDTTSKSLLGSVDDASITDIHPR.

Positions 1-34 (MRRNTDQESPIMSYYSSFFFLFLFSFLTSFRVSA) are cleaved as a signal peptide. At 35–285 (QDPTYVYHTC…PRSGKDGNSK (251 aa)) the chain is on the extracellular side. 2 consecutive Gnk2-homologous domains span residues 38-142 (TYVY…NQNI) and 148-252 (TTGG…IYAF). Asn-49, Asn-53, Asn-71, and Asn-80 each carry an N-linked (GlcNAc...) asparagine glycan. Cystine bridges form between Cys-96/Cys-105 and Cys-108/Cys-133. Residues Asn-114, Asn-159, Asn-185, and Asn-196 are each glycosylated (N-linked (GlcNAc...) asparagine). 2 disulfides stabilise this stretch: Cys-209-Cys-218 and Cys-221-Cys-243. The span at 260–274 (PPPPPPSISTPPVSA) shows a compositional bias: pro residues. A disordered region spans residues 260–280 (PPPPPPSISTPPVSAPPRSGK). A helical membrane pass occupies residues 286 to 306 (VLVIAIVVPIIVAVLLFIAGY). Topologically, residues 307-669 (CFLTRRARKS…DASITDIHPR (363 aa)) are cytoplasmic. The Protein kinase domain maps to 348-634 (FVESNKIGQG…TLPVPRQPGL (287 aa)). Residues 354-362 (IGQGGFGEV) and Lys-376 contribute to the ATP site. Phosphotyrosine is present on Tyr-421. Asp-473 acts as the Proton acceptor in catalysis. Ser-477 is modified (phosphoserine). The residue at position 513 (Thr-513) is a Phosphothreonine. Tyr-521 carries the phosphotyrosine modification.

The protein belongs to the protein kinase superfamily. Ser/Thr protein kinase family. CRK subfamily. Interacts with CRKIP1 (KAPP), CRKIP2 and CRKIP3, three kinase-associated type 2C proteins.

Its subcellular location is the membrane. The catalysed reaction is L-seryl-[protein] + ATP = O-phospho-L-seryl-[protein] + ADP + H(+). It catalyses the reaction L-threonyl-[protein] + ATP = O-phospho-L-threonyl-[protein] + ADP + H(+). This chain is Cysteine-rich receptor-like protein kinase 10 (CRK10), found in Arabidopsis thaliana (Mouse-ear cress).